The sequence spans 279 residues: Putative colanic acid biosynthesis glycosyl transferase WcaA (279 aa).

The protein to R.meliloti ExoO.

It participates in slime biogenesis; slime polysaccharide biosynthesis. This Escherichia coli (strain K12) protein is Putative colanic acid biosynthesis glycosyl transferase WcaA (wcaA).